Here is a 338-residue protein sequence, read N- to C-terminus: Nicotinate-nucleotide--dimethylbenzimidazole phosphoribosyltransferase (338 aa).

Glutamate 306 serves as the catalytic Proton acceptor.

Belongs to the CobT family.

It carries out the reaction 5,6-dimethylbenzimidazole + nicotinate beta-D-ribonucleotide = alpha-ribazole 5'-phosphate + nicotinate + H(+). The protein operates within nucleoside biosynthesis; alpha-ribazole biosynthesis; alpha-ribazole from 5,6-dimethylbenzimidazole: step 1/2. Catalyzes the synthesis of alpha-ribazole-5'-phosphate from nicotinate mononucleotide (NAMN) and 5,6-dimethylbenzimidazole (DMB). This chain is Nicotinate-nucleotide--dimethylbenzimidazole phosphoribosyltransferase, found in Cereibacter sphaeroides (strain KD131 / KCTC 12085) (Rhodobacter sphaeroides).